Here is a 101-residue protein sequence, read N- to C-terminus: Ubiquitin-related modifier 1 homolog 1 (101 aa).

Glycine 101 bears the 1-thioglycine mark. Residue glycine 101 forms a Glycyl lysine isopeptide (Gly-Lys) (interchain with K-? in acceptor proteins) linkage.

The protein belongs to the URM1 family. C-terminal thiocarboxylation occurs in 2 steps, it is first acyl-adenylated (-COAMP) via the hesA/moeB/thiF part of the MOCS3 homolog, then thiocarboxylated (-COSH) via the rhodanese domain of the MOCS3 homolog.

The protein resides in the cytoplasm. It participates in tRNA modification; 5-methoxycarbonylmethyl-2-thiouridine-tRNA biosynthesis. Acts as a sulfur carrier required for 2-thiolation of mcm(5)S(2)U at tRNA wobble positions of cytosolic tRNA(Lys), tRNA(Glu) and tRNA(Gln). Serves as sulfur donor in tRNA 2-thiolation reaction by being thiocarboxylated (-COSH) at its C-terminus by MOCS3. The sulfur is then transferred to tRNA to form 2-thiolation of mcm(5)S(2)U. Also acts as a ubiquitin-like protein (UBL) that is covalently conjugated via an isopeptide bond to lysine residues of target proteins. The thiocarboxylated form serves as substrate for conjugation and oxidative stress specifically induces the formation of UBL-protein conjugates. This is Ubiquitin-related modifier 1 homolog 1 from Arabidopsis thaliana (Mouse-ear cress).